The following is a 507-amino-acid chain: Mitochondrial antiviral-signaling protein (507 aa).

Over 1–482 (MTFAEEKTYK…PCASSVSWAK (482 aa)) the chain is Cytoplasmic. Residues K7 and K10 each participate in a glycyl lysine isopeptide (Lys-Gly) (interchain with G-Cter in ubiquitin) cross-link. Positions 10–77 (KYIRYNHSKF…WVEVFIRALR (68 aa)) constitute a CARD domain. Residues 10–77 (KYIRYNHSKF…WVEVFIRALR (68 aa)) are required for interaction with NLRX1. The S-palmitoyl cysteine moiety is linked to residue C79. Disordered regions lie at residues 123–238 (FAAG…TNLS), 250–326 (TTLS…NIAP), and 350–401 (ASAS…SKPG). Residues 143–147 (PVQDT) form an interaction with TRAF2 region. Phosphoserine occurs at positions 152, 157, 172, 178, 186, and 220. The segment at 153-158 (PVENSE) is interaction with TRAF6. At R234 the chain carries Asymmetric dimethylarginine. 2 stretches are compositionally biased toward low complexity: residues 250–266 (TTLS…KGAG) and 281–293 (VPTN…SVPS). S256 is modified (phosphoserine). The segment covering 300 to 325 (NTMSSKLPISTKSTAATPSTVPTNIA) has biased composition (polar residues). K305 participates in a covalent cross-link: Glycyl lysine isopeptide (Lys-Gly) (interchain with G-Cter in ubiquitin). Residues 340 to 507 (PSKVTASVAK…MLYRSRHLAQ (168 aa)) form an interaction with DHX33 region. A compositionally biased stretch (basic and acidic residues) spans 359 to 368 (RNNKQAKETL). The segment covering 374-391 (VVTTGSSLTRPDISSRSL) has biased composition (polar residues). At S387 the chain carries Phosphoserine. The short motif at 419–422 (LAIS) is the pLxIS motif element. S422 is subject to Phosphoserine; by TBK1. The interval 423-474 (PSTSLGSEPNHGPEENEYSSFRIQVDKSPSVDLLGSPEPLATQQSPEEEEPC) is disordered. Residues 435–440 (PEENEY) form an interaction with TRAF6 region. A helical transmembrane segment spans residues 483–500 (WLGATSALLAAFLAVMLY). At 501–507 (RSRHLAQ) the chain is on the mitochondrial intermembrane side.

Self-associates and polymerizes (via CARD domains) to form 400 nM long three-stranded helical filaments on mitochondria, filament nucleation requires interaction with RIGI whose CARD domains act as a template for filament assembly. Interacts with RIGI, IFIH1/MDA5, TRAF2, TRAF6 and C1QBP. May interact with FADD, RIPK1, CHUK and IKBKB. Interacts (when phosphorylated) with IRF3; following activation and phosphorylation on the pLxIS motif by TBK1, recruits IRF3. Interacts with NLRX1. Interaction with NLRX1 requires the CARD domain. Interacts with PSMA7. Interacts with TRAFD1. Interacts (via C-terminus) with PCBP2 in a complex containing MAVS/IPS1, PCBP2 and ITCH. Interacts with CYLD. Interacts with SRC. Interacts with DHX58/LGP2 and IKBKE. Interacts with STING1. Interacts with IFIT3 (via N-terminus). Interacts with TBK1 only in the presence of IFIT3. Interacts with TTLL12; the interaction prevents MAVS binding to TBK1 and IKBKE. Interacts with MUL1. Interacts with ANKRD17. Interacts with NDFIP1. Interacts with SMURF1; the interaction is mediated by NDFIP1 and leads to MAVS ubiquitination and degradation. Interacts with UBXN1; this interaction inhibits MAVS-mediated antiviral pathway. Interacts (via C-terminus) with GPATCH3; the interaction is markedly increased upon viral infection. Directly interacts (via CARD domain) with ATG5 and ATG12, either as ATG5 and ATG12 monomers or as ATG12-ATG5 conjugates. Interacts with DHX33 (via the helicase C-terminal domain). Interacts with DDX3X (via C-terminus); this interaction may occur rapidly, but transiently after viral infection. The interaction with DDX3X potentiates MAVS-mediated IFNB induction. Conversely inhibition of this interaction prevents MAVS-mediated IFNB induction. Transiently interacts with TRAF3 early during viral infection. Interacts with CLPB. Interacts with TRAF3IP3. Interacts with TOMM70; the interaction is enhanced by virus infection. Interacts with ZNFX1. Interacts with DHX15. Interacts with N4BP3; this interaction promotes the polyubiquitination of MAVS. Interacts with TAX1BP1; this interaction induces MAVS polyubiquitination. Interacts with NLRP3; promoting NLRP3 recruitment to mitochondria and activation of the NLRP3 inflammasome. Interacts with ECSIT; this interaction bridges RIGI to the MAVS complex at the mitochondrion. Interacts with UBL7; this interaction promotes MAVS 'Lys-27'-linked ubiquitination leading to type I interferon production. Interacts (via transmembrane domain) with SMIM30/MAVI1 (via transmembrane domain); the interaction disrupts MAVS interaction with RIGI and inhibits MAVS aggregation, resulting in the repression of type I interferon signaling and innate immune responses. Post-translationally, following activation, phosphorylated by TBK1 at Ser-422 in the pLxIS motif. The phosphorylated pLxIS motif constitutes an IRF3-binding motif, leading to recruitment of the transcription factor IRF3 to induce type-I interferons and other cytokines. Ubiquitinated. Undergoes 'Lys-48'-linked polyubiquitination catalyzed by ITCH; ITCH-dependent polyubiquitination is mediated by the interaction with PCBP2 and leads to MAVS/IPS1 proteasomal degradation. Ubiquitinated by RNF125, leading to its degradation by the proteasome. Undergoes 'Lys-48'-linked ubiquitination catalyzed by SMURF1. Undergoes 'Lys-48'-linked ubiquitination catalyzed by MARCHF5 at Lys-7, leading to proteasomal degradation. Ubiquitinated via 'Lys-63'-linked ubiquitination at Lys-10 by TRIM31, promoting MAVS polymerization and formation of three-stranded helical filaments on mitochondria. Undergoes 'Lys-63'-linked ubiquitination leading to enhanced interaction between MAVS and TRAF2. Undergoes 'Lys-27'-linked ubiquitination by UBE2N and TRIM21 leading to enhanced interaction between MAVS and TBK1. Deubiquitinated by USP10 leading to attenuation of RIGI-mediated MAVS aggregation and production of type I interferon. Undergoes 'Lys-48'-linked polyubiquitination catalyzed by RNF115 leading to its degradation. In terms of processing, proteolytically cleaved by apoptotic caspases during apoptosis, leading to its inactivation. Cleavage by CASP3 during virus-induced apoptosis inactivates it, preventing cytokine overproduction. Post-translationally, palmitoylated by ZHDDC4. Palmitoylation promotes MAVS stabilization and activation by inhibiting 'Lys-48'- but facilitating 'Lys-63'-linked ubiquitination.

It is found in the mitochondrion outer membrane. Its subcellular location is the mitochondrion. It localises to the peroxisome. Its function is as follows. Adapter required for innate immune defense against viruses. Acts downstream of DHX33, RIGI and IFIH1/MDA5, which detect intracellular dsRNA produced during viral replication, to coordinate pathways leading to the activation of NF-kappa-B, IRF3 and IRF7, and to the subsequent induction of antiviral cytokines such as IFN-beta and RANTES (CCL5). Peroxisomal and mitochondrial MAVS act sequentially to create an antiviral cellular state. Upon viral infection, peroxisomal MAVS induces the rapid interferon-independent expression of defense factors that provide short-term protection, whereas mitochondrial MAVS activates an interferon-dependent signaling pathway with delayed kinetics, which amplifies and stabilizes the antiviral response. May activate the same pathways following detection of extracellular dsRNA by TLR3. May protect cells from apoptosis. Involved in NLRP3 inflammasome activation by mediating NLRP3 recruitment to mitochondria. This chain is Mitochondrial antiviral-signaling protein (Mavs), found in Rattus norvegicus (Rat).